Reading from the N-terminus, the 426-residue chain is Histidine--tRNA ligase (426 aa).

Belongs to the class-II aminoacyl-tRNA synthetase family. As to quaternary structure, homodimer.

It localises to the cytoplasm. The catalysed reaction is tRNA(His) + L-histidine + ATP = L-histidyl-tRNA(His) + AMP + diphosphate + H(+). This chain is Histidine--tRNA ligase, found in Streptococcus equi subsp. zooepidemicus (strain MGCS10565).